The following is a 138-amino-acid chain: Basic phospholipase A2 homolog CTs-K49a (138 aa).

The first 16 residues, 1 to 16 (MRTLWIMAVLLVVVEG), serve as a signal peptide directing secretion. Cystine bridges form between cysteine 42-cysteine 131, cysteine 44-cysteine 60, cysteine 59-cysteine 111, cysteine 65-cysteine 138, cysteine 66-cysteine 104, and cysteine 91-cysteine 102. Positions 121 to 133 (KKKKINLKLFCKK) are important for membrane-damaging activities in eukaryotes and bacteria; heparin-binding.

Belongs to the phospholipase A2 family. Group II subfamily. K49 sub-subfamily. Expressed by the venom gland.

It is found in the secreted. Functionally, snake venom phospholipase A2 homolog that lacks catalytic activity. It shows myotoxic and weak anticoagulant activities. A model of myotoxic mechanism has been proposed: an apo Lys49-PLA2 is activated by the entrance of a hydrophobic molecule (e.g. fatty acid) at the hydrophobic channel of the protein leading to a reorientation of a monomer. This reorientation causes a transition between 'inactive' to 'active' states, causing alignment of C-terminal and membrane-docking sites (MDoS) side-by-side and putting the membrane-disruption sites (MDiS) in the same plane, exposed to solvent and in a symmetric position for both monomers. The MDoS region stabilizes the toxin on membrane by the interaction of charged residues with phospholipid head groups. Subsequently, the MDiS region destabilizes the membrane with penetration of hydrophobic residues. This insertion causes a disorganization of the membrane, allowing an uncontrolled influx of ions (i.e. calcium and sodium), and eventually triggering irreversible intracellular alterations and cell death. This is Basic phospholipase A2 homolog CTs-K49a from Trimeresurus stejnegeri (Chinese green tree viper).